We begin with the raw amino-acid sequence, 277 residues long: MSRVRISLIYLCTFMIITSTKTIEYTACNNTIIIPCTIDNPTKYIRWKLDNHDILTYNKTSKTTILSKWHTSARLHSLSDSDVSLIIEYKDILPGTYTCEDNTGIKSTVKLVQRHTNWFNDYQTMLMFIFTGITLFLLFLEITYTSISVVFSTNLGILQVFGCVIAMIELCGAFLFYPSMFTLRHIIGLLMMTLPSIFLIITKVFSFWLLCKLSCAVHLIIYYQLAGYILTVLGLGLSLKECVDGTLLLSGLGTIMVSEHFSLLFLVCFPSTQRDYY.

2 N-linked (GlcNAc...) asparagine; by host glycosylation sites follow: Asn-29 and Asn-58. Helical transmembrane passes span 124 to 144, 156 to 176, 186 to 206, 219 to 239, and 247 to 267; these read TMLM…EITY, GILQ…AFLF, IIGL…KVFS, LIIY…GLSL, and LLLS…LFLV.

Belongs to the orthopoxvirus OPG166 protein family.

Its subcellular location is the host membrane. Promotes, when overexpressed, the influx of extracellular Ca(2+), leading to membrane permeability and host cell necrosis. This chain is Protein OPG166 (OPG166), found in Bos taurus (Bovine).